The sequence spans 370 residues: Phospho-N-acetylmuramoyl-pentapeptide-transferase (370 aa).

10 consecutive transmembrane segments (helical) span residues 29–49, 70–90, 93–113, 133–153, 177–197, 209–229, 251–271, 273–293, 298–318, and 349–369; these read AGLT…SFLL, GTPT…TLLW, LSNW…GLGF, KFIV…YYTG, GPVW…LIGS, GLAS…AYVS, VFLA…CHPA, VFMG…VAIM, ILLV…ILQV, and VIRF…TLKI.

Belongs to the glycosyltransferase 4 family. MraY subfamily. Mg(2+) is required as a cofactor.

It is found in the cell inner membrane. The catalysed reaction is UDP-N-acetyl-alpha-D-muramoyl-L-alanyl-gamma-D-glutamyl-meso-2,6-diaminopimeloyl-D-alanyl-D-alanine + di-trans,octa-cis-undecaprenyl phosphate = di-trans,octa-cis-undecaprenyl diphospho-N-acetyl-alpha-D-muramoyl-L-alanyl-D-glutamyl-meso-2,6-diaminopimeloyl-D-alanyl-D-alanine + UMP. It participates in cell wall biogenesis; peptidoglycan biosynthesis. Functionally, catalyzes the initial step of the lipid cycle reactions in the biosynthesis of the cell wall peptidoglycan: transfers peptidoglycan precursor phospho-MurNAc-pentapeptide from UDP-MurNAc-pentapeptide onto the lipid carrier undecaprenyl phosphate, yielding undecaprenyl-pyrophosphoryl-MurNAc-pentapeptide, known as lipid I. This Leptospira biflexa serovar Patoc (strain Patoc 1 / Ames) protein is Phospho-N-acetylmuramoyl-pentapeptide-transferase.